The sequence spans 727 residues: DNA replication licensing factor MCM5 (727 aa).

The MCM domain maps to 325–531 (VYKNICTKIA…SQDKEIASHI (207 aa)). Position 375-382 (375-382 (GDPSTAKS)) interacts with ATP. An Arginine finger motif is present at residues 507 to 510 (SRFD).

The protein belongs to the MCM family. In terms of assembly, component of the minichromosome maintenance (MCM) complex, a heterotetramer composed of MCM2, MCM3, MCM4, MCM5, MCM6 and MCM7. Interacts with EGT1. Expressed in shoot apex and flower buds.

The protein resides in the nucleus. It is found in the cytoplasm. The enzyme catalyses ATP + H2O = ADP + phosphate + H(+). Its function is as follows. Probable component of the MCM2-7 complex (MCM complex) that may function as a DNA helicase and which is essential to undergo a single round of replication initiation and elongation per cell cycle in eukaryotic cells. This chain is DNA replication licensing factor MCM5 (MCM5), found in Arabidopsis thaliana (Mouse-ear cress).